Here is a 734-residue protein sequence, read N- to C-terminus: Sulfate transporter (734 aa).

Basic and acidic residues predominate over residues 1–18 (MSLKNEDQNDLSPKDSVK). A disordered region spans residues 1–38 (MSLKNEDQNDLSPKDSVKGNDQYRAPSGIHLEPEEESR). Ser-12 and Ser-16 each carry phosphoserine. Transmembrane regions (helical) follow at residues 113–133 (VMSGLIVGILLVPQSIAYSLL) and 138–158 (PIYGLYTSFFASLIYFILGTS). The N-linked (GlcNAc...) asparagine glycan is linked to Asn-194. 6 helical membrane-spanning segments follow: residues 214–234 (IIVGSTVTFVAGVYQVAMGFF), 237–257 (GFVSVYLSDALLGGFVTGASF), 379–399 (VDAIAIAIIGFAITVSLSEMF), 415–435 (AIGFCNIIPSFFHCFTTSAAL), 453–473 (VMTALVLLLVLLVIAPLFFSL), and 519–539 (LISTEIGLLTGVCFSMFCVIL). One can recognise an STAS domain in the interval 563–714 (AYKNLQAKSG…YSIYEAMTFA (152 aa)).

Belongs to the SLC26A/SulP transporter (TC 2.A.53) family. In terms of processing, N-glycosylated.

The protein resides in the cell membrane. Its subcellular location is the apical cell membrane. The catalysed reaction is oxalate(in) + sulfate(out) = oxalate(out) + sulfate(in). It catalyses the reaction sulfate(out) + 2 chloride(in) = sulfate(in) + 2 chloride(out). The enzyme catalyses oxalate(out) + 2 chloride(in) = oxalate(in) + 2 chloride(out). It carries out the reaction bromide(in) + chloride(out) = bromide(out) + chloride(in). The catalysed reaction is nitrate(in) + chloride(out) = nitrate(out) + chloride(in). It catalyses the reaction iodide(in) + chloride(out) = iodide(out) + chloride(in). In terms of biological role, sulfate transporter which mediates sulfate uptake into chondrocytes in order to maintain adequate sulfation of proteoglycans which is needed for cartilage development. Mediates electroneutral anion exchange of sulfate ions for oxalate ions, sulfate and oxalate ions for chloride and/or hydroxyl ions and chloride ions for bromide, iodide and nitrate ions. The coupling of sulfate transport to both hydroxyl and chloride ions likely serves to ensure transport at both acidic pH when most sulfate uptake is mediated by sulfate-hydroxide exchange and alkaline pH when most sulfate uptake is mediated by sulfate-chloride exchange. Essential for chondrocyte proliferation, differentiation and cell size expansion. The polypeptide is Sulfate transporter (SLC26A2) (Bos taurus (Bovine)).